Consider the following 238-residue polypeptide: ATP synthase subunit a (238 aa).

Helical transmembrane passes span 17-37, 75-95, 112-132, 179-199, and 202-222; these read LSDM…AVAA, FLTL…LGLP, DATV…YYGV, ILLG…AVGA, and FPIM…AFIF.

Belongs to the ATPase A chain family. As to quaternary structure, F-type ATPases have 2 components, CF(1) - the catalytic core - and CF(0) - the membrane proton channel. CF(1) has five subunits: alpha(3), beta(3), gamma(1), delta(1), epsilon(1). CF(0) has three main subunits: a(1), b(2) and c(9-12). The alpha and beta chains form an alternating ring which encloses part of the gamma chain. CF(1) is attached to CF(0) by a central stalk formed by the gamma and epsilon chains, while a peripheral stalk is formed by the delta and b chains.

The protein resides in the cell membrane. In terms of biological role, key component of the proton channel; it plays a direct role in the translocation of protons across the membrane. This Bacillus sp. (strain PS3) protein is ATP synthase subunit a.